Consider the following 443-residue polypeptide: Protein Z-dependent protease inhibitor (443 aa).

The N-terminal stretch at 1-23 is a signal peptide; sequence MKVVPSLLLSVLLAQVWLVPGLA. Residues 24–66 are disordered; that stretch reads PSPQSPETPAPQNQTSRVVQAPREEEEDEQEASEEKAGDEEKA. N-linked (GlcNAc...) asparagine glycosylation occurs at asparagine 36. Serine 56 bears the Phosphoserine mark. Positions 56-66 are enriched in basic and acidic residues; it reads SEEKAGDEEKA. The tract at residues 136-153 is heparin-binding; sequence TKPGLLPSLFKGLRETLS. 2 N-linked (GlcNAc...) asparagine glycosylation sites follow: asparagine 180 and asparagine 295.

This sequence belongs to the serpin family. Phosphorylated by FAM20C in the extracellular medium.

It is found in the secreted. In terms of biological role, inhibits activity of the coagulation protease factor Xa in the presence of PROZ, calcium and phospholipids. Also inhibits factor XIa in the absence of cofactors. The chain is Protein Z-dependent protease inhibitor (SERPINA10) from Pongo abelii (Sumatran orangutan).